Consider the following 163-residue polypeptide: Ribonuclease P protein component 4 (163 aa).

4 residues coordinate Zn(2+): cysteine 66, cysteine 69, cysteine 96, and cysteine 99. The tract at residues glycine 110–aspartate 163 is disordered. The span at glutamine 152–aspartate 163 shows a compositional bias: gly residues.

The protein belongs to the eukaryotic/archaeal RNase P protein component 4 family. As to quaternary structure, consists of a catalytic RNA component and at least 4-5 protein subunits. Requires Zn(2+) as cofactor.

The protein localises to the cytoplasm. It carries out the reaction Endonucleolytic cleavage of RNA, removing 5'-extranucleotides from tRNA precursor.. In terms of biological role, part of ribonuclease P, a protein complex that generates mature tRNA molecules by cleaving their 5'-ends. The chain is Ribonuclease P protein component 4 from Aeropyrum pernix (strain ATCC 700893 / DSM 11879 / JCM 9820 / NBRC 100138 / K1).